The following is a 340-amino-acid chain: UDP-3-O-acylglucosamine N-acyltransferase (340 aa).

Residue His-237 is the Proton acceptor of the active site.

The protein belongs to the transferase hexapeptide repeat family. LpxD subfamily. Homotrimer.

The catalysed reaction is a UDP-3-O-[(3R)-3-hydroxyacyl]-alpha-D-glucosamine + a (3R)-hydroxyacyl-[ACP] = a UDP-2-N,3-O-bis[(3R)-3-hydroxyacyl]-alpha-D-glucosamine + holo-[ACP] + H(+). It functions in the pathway bacterial outer membrane biogenesis; LPS lipid A biosynthesis. Catalyzes the N-acylation of UDP-3-O-acylglucosamine using 3-hydroxyacyl-ACP as the acyl donor. Is involved in the biosynthesis of lipid A, a phosphorylated glycolipid that anchors the lipopolysaccharide to the outer membrane of the cell. This Desulfosudis oleivorans (strain DSM 6200 / JCM 39069 / Hxd3) (Desulfococcus oleovorans) protein is UDP-3-O-acylglucosamine N-acyltransferase.